The primary structure comprises 293 residues: Small ribosomal subunit biogenesis GTPase RsgA (293 aa).

Residues 63-223 (KNELVRPPIA…VADTPGFSSL (161 aa)) enclose the CP-type G domain. GTP-binding positions include 112-115 (SKMD) and 166-174 (GQSGVGKSS). Residues cysteine 247, cysteine 252, histidine 254, and cysteine 260 each coordinate Zn(2+).

The protein belongs to the TRAFAC class YlqF/YawG GTPase family. RsgA subfamily. In terms of assembly, monomer. Associates with 30S ribosomal subunit, binds 16S rRNA. It depends on Zn(2+) as a cofactor.

Its subcellular location is the cytoplasm. Its function is as follows. One of several proteins that assist in the late maturation steps of the functional core of the 30S ribosomal subunit. Helps release RbfA from mature subunits. May play a role in the assembly of ribosomal proteins into the subunit. Circularly permuted GTPase that catalyzes slow GTP hydrolysis, GTPase activity is stimulated by the 30S ribosomal subunit. The polypeptide is Small ribosomal subunit biogenesis GTPase RsgA (Bacillus anthracis).